Here is a 147-residue protein sequence, read N- to C-terminus: Hemoglobin subunit beta (147 aa).

A Globin domain is found at glutamate 3–histidine 147. Heme b is bound by residues histidine 64 and histidine 93.

Belongs to the globin family. In terms of assembly, hb 1 is a heterotetramer of two alpha-1 and two beta chains. Hb 2 is a heterotetramer of two alpha-2 and two beta chains. Red blood cells.

Functionally, involved in oxygen transport from gills to the various peripheral tissues. In Cottoperca gobio (Frogmouth), this protein is Hemoglobin subunit beta (hbb).